We begin with the raw amino-acid sequence, 766 residues long: Serine/threonine-protein kinase DCLK2 (766 aa).

A disordered region spans residues 1–45 (MASTRSIELEHFEERDKRPRPGSRRGAPSSSGGSSSSGPKGNGLI). Basic and acidic residues predominate over residues 7 to 19 (IELEHFEERDKRP). Positions 24-39 (RRGAPSSSGGSSSSGP) are enriched in low complexity. At Thr61 the chain carries Phosphothreonine. Doublecortin domains lie at 72-158 (KKAR…VDYT) and 197-280 (KLVT…AQDD). Composition is skewed to low complexity over residues 300–312 (AVKY…PGPS) and 324–347 (TPSS…SPGS). A disordered region spans residues 300 to 378 (AVKYSGSKSP…ELDRCISPEG (79 aa)). Ser362 carries the phosphoserine modification. In terms of domain architecture, Protein kinase spans 394–651 (YKIGKVIGDG…AGQILSHPWV (258 aa)). ATP contacts are provided by residues 400–408 (IGDGNFAVV) and Lys423. The Proton acceptor role is filled by Asp515. Ser647 carries the phosphoserine modification. Position 666 is a phosphothreonine (Thr666). Residues 707–766 (CQDSGRPGMEPISPVPPSVEEIPVPGEAVPAPTPPESPTPHPPPAAPGGERAGTWRRHRD) are disordered. Residues 724–736 (SVEEIPVPGEAVP) are compositionally biased toward low complexity. Residues 737–752 (APTPPESPTPHPPPAA) are compositionally biased toward pro residues.

The protein belongs to the protein kinase superfamily. CAMK Ser/Thr protein kinase family. CaMK subfamily. Binds to and stabilizes microtubules. Interacts with MAPK8IP1/JIP-1, MAPK8IP2/JIP-2, MAPK9/JNK2, PPP1R9B/NEURABIN-2 and actin. Post-translationally, autophosphorylated. As to expression, expressed in the brain, heart and eyes.

The protein localises to the cytoplasm. The protein resides in the cytoskeleton. The catalysed reaction is L-seryl-[protein] + ATP = O-phospho-L-seryl-[protein] + ADP + H(+). It carries out the reaction L-threonyl-[protein] + ATP = O-phospho-L-threonyl-[protein] + ADP + H(+). Its function is as follows. Protein kinase with a significantly reduced C(a2+)/CAM affinity and dependence compared to other members of the CaMK family. May play a role in the down-regulation of CRE-dependent gene activation probably by phosphorylation of the CREB coactivator CRTC2/TORC2 and the resulting retention of TORC2 in the cytoplasm. The sequence is that of Serine/threonine-protein kinase DCLK2 (DCLK2) from Homo sapiens (Human).